The following is a 211-amino-acid chain: Vascular-related unknown protein 1 (211 aa).

A compositionally biased stretch (polar residues) spans 1-12; the sequence is MMDTFSCNSYEQ. The disordered stretch occupies residues 1-40; it reads MMDTFSCNSYEQNHPHDDDIDIDAHDHDSHGGDHQEESGW. Residues 13–37 show a composition bias toward basic and acidic residues; it reads NHPHDDDIDIDAHDHDSHGGDHQEE.

In terms of tissue distribution, expressed in vascular tissues of cotyledons, rosette leaves, sepals, petals, anther filaments. Expressed in roots, inflorescence stems and developing seeds.

The protein localises to the cytoplasm. It is found in the nucleus. Involved in the regulation of xylem development and growth. May regulate secondary wall formation during vascular development by modulation of brassinosteroid, gibberellin and auxin hormone signaling pathways. This chain is Vascular-related unknown protein 1, found in Arabidopsis thaliana (Mouse-ear cress).